The following is a 283-amino-acid chain: NADPH-dependent 3-dehydrocapnine reductase (283 aa).

Tyr153 acts as the Proton acceptor in catalysis.

The protein belongs to the short-chain dehydrogenases/reductases (SDR) family.

The catalysed reaction is 3-oxocapnine + NADPH + H(+) = capnine + NADP(+). It functions in the pathway lipid metabolism. Functionally, reductase involved in the biosynthesis of capnine, a sulfonolipid present in the outer membrane of gliding Bacteroidetes and essential for gliding motility. Catalyzes the reduction of 3-dehydrocapnine to capnine. This chain is NADPH-dependent 3-dehydrocapnine reductase, found in Ornithobacterium rhinotracheale.